A 240-amino-acid polypeptide reads, in one-letter code: Ribonuclease PH (240 aa).

Phosphate contacts are provided by residues arginine 87 and 125 to 127; that span reads GTR.

Belongs to the RNase PH family. As to quaternary structure, homohexameric ring arranged as a trimer of dimers.

It catalyses the reaction tRNA(n+1) + phosphate = tRNA(n) + a ribonucleoside 5'-diphosphate. Its function is as follows. Phosphorolytic 3'-5' exoribonuclease that plays an important role in tRNA 3'-end maturation. Removes nucleotide residues following the 3'-CCA terminus of tRNAs; can also add nucleotides to the ends of RNA molecules by using nucleoside diphosphates as substrates, but this may not be physiologically important. Probably plays a role in initiation of 16S rRNA degradation (leading to ribosome degradation) during starvation. This Pseudomonas putida (strain ATCC 47054 / DSM 6125 / CFBP 8728 / NCIMB 11950 / KT2440) protein is Ribonuclease PH.